Here is a 281-residue protein sequence, read N- to C-terminus: HTH-type transcriptional activator RhaR (281 aa).

Residues 178–276 (DKLLAALAAS…GMSPGQWRQR (99 aa)) form the HTH araC/xylS-type domain. 2 consecutive DNA-binding regions (H-T-H motif) follow at residues 195 to 216 (ERFC…RQQT) and 243 to 266 (IGDI…SREI).

Binds DNA as a dimer.

It is found in the cytoplasm. In terms of biological role, activates expression of the rhaSR operon in response to L-rhamnose. This Klebsiella pneumoniae subsp. pneumoniae (strain ATCC 700721 / MGH 78578) protein is HTH-type transcriptional activator RhaR.